Reading from the N-terminus, the 448-residue chain is Signal recognition particle protein (448 aa).

GTP is bound by residues 101 to 108, 182 to 186, and 240 to 243; these read GLQGSGKT, DSAGR, and SKFD.

This sequence belongs to the GTP-binding SRP family. SRP54 subfamily. As to quaternary structure, part of the signal recognition particle protein translocation system, which is composed of SRP and FtsY. SRP is a ribonucleoprotein composed of Ffh and a 4.5S RNA molecule.

It localises to the cytoplasm. The catalysed reaction is GTP + H2O = GDP + phosphate + H(+). Its function is as follows. Involved in targeting and insertion of nascent membrane proteins into the cytoplasmic membrane. Binds to the hydrophobic signal sequence of the ribosome-nascent chain (RNC) as it emerges from the ribosomes. The SRP-RNC complex is then targeted to the cytoplasmic membrane where it interacts with the SRP receptor FtsY. Interaction with FtsY leads to the transfer of the RNC complex to the Sec translocase for insertion into the membrane, the hydrolysis of GTP by both Ffh and FtsY, and the dissociation of the SRP-FtsY complex into the individual components. The chain is Signal recognition particle protein from Helicobacter pylori (strain J99 / ATCC 700824) (Campylobacter pylori J99).